The sequence spans 306 residues: Homoserine kinase (306 aa).

90 to 100 lines the ATP pocket; that stretch reads PLARGLGSSAS.

Belongs to the GHMP kinase family. Homoserine kinase subfamily.

The protein localises to the cytoplasm. It catalyses the reaction L-homoserine + ATP = O-phospho-L-homoserine + ADP + H(+). Its pathway is amino-acid biosynthesis; L-threonine biosynthesis; L-threonine from L-aspartate: step 4/5. In terms of biological role, catalyzes the ATP-dependent phosphorylation of L-homoserine to L-homoserine phosphate. This Staphylococcus epidermidis (strain ATCC 35984 / DSM 28319 / BCRC 17069 / CCUG 31568 / BM 3577 / RP62A) protein is Homoserine kinase.